The primary structure comprises 121 residues: Group 1 truncated hemoglobin (121 aa).

Position 1 is an N-acetylmethionine (Met1). His73 is a heme binding site.

Belongs to the truncated hemoglobin family. Group I subfamily. Monomer. Heme is required as a cofactor.

The polypeptide is Group 1 truncated hemoglobin (Tetrahymena thermophila).